A 520-amino-acid polypeptide reads, in one-letter code: Probable protein phosphatase 2C 39 (520 aa).

Residues 160 to 507 (FLTSTEIKMA…DDVTIIVIIL (348 aa)) enclose the PPM-type phosphatase domain. Mn(2+)-binding residues include aspartate 195, glycine 196, aspartate 435, and aspartate 498.

It belongs to the PP2C family. It depends on Mg(2+) as a cofactor. Requires Mn(2+) as cofactor.

It catalyses the reaction O-phospho-L-seryl-[protein] + H2O = L-seryl-[protein] + phosphate. The catalysed reaction is O-phospho-L-threonyl-[protein] + H2O = L-threonyl-[protein] + phosphate. This Oryza sativa subsp. japonica (Rice) protein is Probable protein phosphatase 2C 39.